Consider the following 828-residue polypeptide: Periplasmic nitrate reductase (828 aa).

Residues 1–31 constitute a signal peptide (tat-type signal); the sequence is MKLSRRSFMKANAVAAAAAAAGLSVPGVARA. The 4Fe-4S Mo/W bis-MGD-type domain occupies 39–95; sequence IKWDKAPCRFCGTGCGVLVGTQQGRVVACQGDPDAPVNRGLNCIKGYFLPKIMYGKD. [4Fe-4S] cluster-binding residues include Cys-46, Cys-49, Cys-53, and Cys-81. Residues Lys-83, Gln-150, Asn-175, Cys-179, 212–219, 243–247, 262–264, Met-372, Gln-376, Asn-482, 508–509, Lys-531, Asp-558, and 718–727 contribute to the Mo-bis(molybdopterin guanine dinucleotide) site; these read WGANMAEM, STYQH, QSD, SD, and TGRVLEHWHT. Residue Phe-794 participates in substrate binding. Mo-bis(molybdopterin guanine dinucleotide) contacts are provided by Asn-802 and Lys-819.

This sequence belongs to the prokaryotic molybdopterin-containing oxidoreductase family. NasA/NapA/NarB subfamily. Component of the periplasmic nitrate reductase NapAB complex composed of NapA and NapB. It depends on [4Fe-4S] cluster as a cofactor. Requires Mo-bis(molybdopterin guanine dinucleotide) as cofactor. Post-translationally, predicted to be exported by the Tat system. The position of the signal peptide cleavage has not been experimentally proven.

The protein localises to the periplasm. It carries out the reaction 2 Fe(II)-[cytochrome] + nitrate + 2 H(+) = 2 Fe(III)-[cytochrome] + nitrite + H2O. In terms of biological role, catalytic subunit of the periplasmic nitrate reductase complex NapAB. Receives electrons from NapB and catalyzes the reduction of nitrate to nitrite. This is Periplasmic nitrate reductase from Escherichia coli (strain K12 / MC4100 / BW2952).